The chain runs to 114 residues: Large ribosomal subunit protein uL22 (114 aa).

The protein belongs to the universal ribosomal protein uL22 family. Part of the 50S ribosomal subunit.

Its function is as follows. This protein binds specifically to 23S rRNA; its binding is stimulated by other ribosomal proteins, e.g. L4, L17, and L20. It is important during the early stages of 50S assembly. It makes multiple contacts with different domains of the 23S rRNA in the assembled 50S subunit and ribosome. Functionally, the globular domain of the protein is located near the polypeptide exit tunnel on the outside of the subunit, while an extended beta-hairpin is found that lines the wall of the exit tunnel in the center of the 70S ribosome. The chain is Large ribosomal subunit protein uL22 from Streptococcus pyogenes serotype M5 (strain Manfredo).